We begin with the raw amino-acid sequence, 73 residues long: UPF0346 protein SSP1318 (73 aa).

This sequence belongs to the UPF0346 family.

This Staphylococcus saprophyticus subsp. saprophyticus (strain ATCC 15305 / DSM 20229 / NCIMB 8711 / NCTC 7292 / S-41) protein is UPF0346 protein SSP1318.